We begin with the raw amino-acid sequence, 223 residues long: Deoxyribose-phosphate aldolase (223 aa).

Catalysis depends on Asp91, which acts as the Proton donor/acceptor. Residue Lys153 is the Schiff-base intermediate with acetaldehyde of the active site. The Proton donor/acceptor role is filled by Lys182.

Belongs to the DeoC/FbaB aldolase family. DeoC type 1 subfamily.

Its subcellular location is the cytoplasm. It catalyses the reaction 2-deoxy-D-ribose 5-phosphate = D-glyceraldehyde 3-phosphate + acetaldehyde. It participates in carbohydrate degradation; 2-deoxy-D-ribose 1-phosphate degradation; D-glyceraldehyde 3-phosphate and acetaldehyde from 2-deoxy-alpha-D-ribose 1-phosphate: step 2/2. Catalyzes a reversible aldol reaction between acetaldehyde and D-glyceraldehyde 3-phosphate to generate 2-deoxy-D-ribose 5-phosphate. The sequence is that of Deoxyribose-phosphate aldolase from Streptococcus pyogenes serotype M1.